A 222-amino-acid chain; its full sequence is Ribosomal RNA small subunit methyltransferase I (222 aa).

It belongs to the methyltransferase superfamily. RsmI family.

It is found in the cytoplasm. It catalyses the reaction cytidine(1402) in 16S rRNA + S-adenosyl-L-methionine = 2'-O-methylcytidine(1402) in 16S rRNA + S-adenosyl-L-homocysteine + H(+). Its function is as follows. Catalyzes the 2'-O-methylation of the ribose of cytidine 1402 (C1402) in 16S rRNA. The protein is Ribosomal RNA small subunit methyltransferase I of Mycoplasmopsis pulmonis (strain UAB CTIP) (Mycoplasma pulmonis).